The chain runs to 500 residues: 2-isopropylmalate synthase (500 aa).

The region spanning 5 to 266 (LFIFDTTLRD…ITNITTNKIY (262 aa)) is the Pyruvate carboxyltransferase domain. Positions 14, 202, 204, and 238 each coordinate Mn(2+). The interval 389-500 (KLEYLQVTSG…VDAINKFIVD (112 aa)) is regulatory domain.

It belongs to the alpha-IPM synthase/homocitrate synthase family. LeuA type 1 subfamily. In terms of assembly, homodimer. Mn(2+) is required as a cofactor.

It is found in the cytoplasm. The catalysed reaction is 3-methyl-2-oxobutanoate + acetyl-CoA + H2O = (2S)-2-isopropylmalate + CoA + H(+). It participates in amino-acid biosynthesis; L-leucine biosynthesis; L-leucine from 3-methyl-2-oxobutanoate: step 1/4. Functionally, catalyzes the condensation of the acetyl group of acetyl-CoA with 3-methyl-2-oxobutanoate (2-ketoisovalerate) to form 3-carboxy-3-hydroxy-4-methylpentanoate (2-isopropylmalate). This is 2-isopropylmalate synthase from Parabacteroides distasonis (strain ATCC 8503 / DSM 20701 / CIP 104284 / JCM 5825 / NCTC 11152).